We begin with the raw amino-acid sequence, 399 residues long: Probable 3-ketosteroid-9-alpha-monooxygenase, oxygenase component (399 aa).

The Rieske domain maps to 26–128; that stretch reads WHCLGLVRDF…VAEVSGQLFV (103 aa). The [2Fe-2S] cluster site is built by cysteine 67, histidine 69, cysteine 86, and histidine 89. Residues asparagine 175, histidine 181, histidine 186, and aspartate 307 each contribute to the Fe cation site.

Homotrimer. The two-component system 3-ketosteroid-9-alpha-monooxygenase is composed of an oxygenase component KshA and a reductase component KshB. It depends on [2Fe-2S] cluster as a cofactor. Fe cation serves as cofactor.

In terms of biological role, could catalyze the introduction of a 9alpha-hydroxyl moiety into the ring B of 3-ketosteroid substrates. In Rhodococcus rhodochrous, this protein is Probable 3-ketosteroid-9-alpha-monooxygenase, oxygenase component.